The sequence spans 874 residues: Alanine--tRNA ligase (874 aa).

Residues His562, His566, Cys665, and His669 each coordinate Zn(2+).

The protein belongs to the class-II aminoacyl-tRNA synthetase family. Requires Zn(2+) as cofactor.

The protein resides in the cytoplasm. It catalyses the reaction tRNA(Ala) + L-alanine + ATP = L-alanyl-tRNA(Ala) + AMP + diphosphate. Functionally, catalyzes the attachment of alanine to tRNA(Ala) in a two-step reaction: alanine is first activated by ATP to form Ala-AMP and then transferred to the acceptor end of tRNA(Ala). Also edits incorrectly charged Ser-tRNA(Ala) and Gly-tRNA(Ala) via its editing domain. This Pseudomonas putida (strain ATCC 700007 / DSM 6899 / JCM 31910 / BCRC 17059 / LMG 24140 / F1) protein is Alanine--tRNA ligase.